We begin with the raw amino-acid sequence, 368 residues long: Ankyrin repeat domain-containing protein 40 (368 aa).

Position 1 is an N-acetylmethionine (M1). ANK repeat units lie at residues E9–S38 and N43–I72. Disordered regions lie at residues M93 to S115, D139 to P176, and I196 to Y238. Residues V95–N107 are compositionally biased toward acidic residues. The span at S149–P169 shows a compositional bias: pro residues. Residues P212–P224 show a composition bias toward polar residues.

The chain is Ankyrin repeat domain-containing protein 40 (ANKRD40) from Homo sapiens (Human).